The chain runs to 309 residues: Homoserine O-succinyltransferase (309 aa).

Cys-142 functions as the Acyl-thioester intermediate in the catalytic mechanism. Positions 163 and 192 each coordinate substrate. The active-site Proton acceptor is His-235. Glu-237 is an active-site residue. Residue Arg-249 participates in substrate binding.

This sequence belongs to the MetA family.

It is found in the cytoplasm. The enzyme catalyses L-homoserine + succinyl-CoA = O-succinyl-L-homoserine + CoA. It functions in the pathway amino-acid biosynthesis; L-methionine biosynthesis via de novo pathway; O-succinyl-L-homoserine from L-homoserine: step 1/1. Its function is as follows. Transfers a succinyl group from succinyl-CoA to L-homoserine, forming succinyl-L-homoserine. This chain is Homoserine O-succinyltransferase, found in Pectobacterium carotovorum subsp. carotovorum (strain PC1).